A 352-amino-acid chain; its full sequence is Ni-sirohydrochlorin a,c-diamide reductive cyclase complex, component CfbD (352 aa).

It belongs to the NifD/NifK/NifE/NifN family. Homodimer or monomer. The Ni-sirohydrochlorin a,c-diamide reductive cyclase complex is composed of a NifH homolog component CfbC and a NifD homolog component CfbD. Requires [4Fe-4S] cluster as cofactor.

It carries out the reaction Ni-sirohydrochlorin a,c-diamide + 3 AH2 + ATP + H2O = 15,17(3)-seco-F430-17(3)-acid + 3 A + ADP + phosphate. Its function is as follows. Involved in the biosynthesis of the unique nickel-containing tetrapyrrole coenzyme F430, the prosthetic group of methyl-coenzyme M reductase (MCR), which plays a key role in methanogenesis and anaerobic methane oxidation. Catalyzes both the six-electron reduction of the tetrahydroporphyrin ring system and the gamma-lactamization of the c-acetamide side chain of Ni-sirohydrochlorin a,c-diamide to yield 15,17(3)-seco-F430-17(3)-acid (seco-F430), the last intermediate in the biosynthesis of the coenzyme F430. This chain is Ni-sirohydrochlorin a,c-diamide reductive cyclase complex, component CfbD, found in Methanocaldococcus jannaschii (strain ATCC 43067 / DSM 2661 / JAL-1 / JCM 10045 / NBRC 100440) (Methanococcus jannaschii).